Consider the following 346-residue polypeptide: Eukaryotic translation initiation factor 3 subunit I (346 aa).

5 WD repeats span residues G8 to H49, G50 to D91, C145 to N184, E189 to T228, and G286 to M325.

This sequence belongs to the eIF-3 subunit I family. As to quaternary structure, component of the eukaryotic translation initiation factor 3 (eIF-3) complex.

The protein resides in the cytoplasm. Functionally, component of the eukaryotic translation initiation factor 3 (eIF-3) complex, which is involved in protein synthesis of a specialized repertoire of mRNAs and, together with other initiation factors, stimulates binding of mRNA and methionyl-tRNAi to the 40S ribosome. The eIF-3 complex specifically targets and initiates translation of a subset of mRNAs involved in cell proliferation. The polypeptide is Eukaryotic translation initiation factor 3 subunit I (tif-34) (Neurospora crassa (strain ATCC 24698 / 74-OR23-1A / CBS 708.71 / DSM 1257 / FGSC 987)).